The sequence spans 460 residues: ATP synthase subunit beta (460 aa).

150 to 157 lines the ATP pocket; the sequence is GGAGVGKT.

It belongs to the ATPase alpha/beta chains family. F-type ATPases have 2 components, CF(1) - the catalytic core - and CF(0) - the membrane proton channel. CF(1) has five subunits: alpha(3), beta(3), gamma(1), delta(1), epsilon(1). CF(0) has three main subunits: a(1), b(2) and c(9-12). The alpha and beta chains form an alternating ring which encloses part of the gamma chain. CF(1) is attached to CF(0) by a central stalk formed by the gamma and epsilon chains, while a peripheral stalk is formed by the delta and b chains.

It is found in the cell inner membrane. It catalyses the reaction ATP + H2O + 4 H(+)(in) = ADP + phosphate + 5 H(+)(out). In terms of biological role, produces ATP from ADP in the presence of a proton gradient across the membrane. The catalytic sites are hosted primarily by the beta subunits. The chain is ATP synthase subunit beta from Erwinia tasmaniensis (strain DSM 17950 / CFBP 7177 / CIP 109463 / NCPPB 4357 / Et1/99).